The chain runs to 629 residues: DNA mismatch repair protein MutL (629 aa).

Belongs to the DNA mismatch repair MutL/HexB family.

This protein is involved in the repair of mismatches in DNA. It is required for dam-dependent methyl-directed DNA mismatch repair. May act as a 'molecular matchmaker', a protein that promotes the formation of a stable complex between two or more DNA-binding proteins in an ATP-dependent manner without itself being part of a final effector complex. The polypeptide is DNA mismatch repair protein MutL (Rhodospirillum rubrum (strain ATCC 11170 / ATH 1.1.1 / DSM 467 / LMG 4362 / NCIMB 8255 / S1)).